We begin with the raw amino-acid sequence, 95 residues long: Aspartyl/glutamyl-tRNA(Asn/Gln) amidotransferase subunit C (95 aa).

This sequence belongs to the GatC family. Heterotrimer of A, B and C subunits.

The catalysed reaction is L-glutamyl-tRNA(Gln) + L-glutamine + ATP + H2O = L-glutaminyl-tRNA(Gln) + L-glutamate + ADP + phosphate + H(+). It carries out the reaction L-aspartyl-tRNA(Asn) + L-glutamine + ATP + H2O = L-asparaginyl-tRNA(Asn) + L-glutamate + ADP + phosphate + 2 H(+). Functionally, allows the formation of correctly charged Asn-tRNA(Asn) or Gln-tRNA(Gln) through the transamidation of misacylated Asp-tRNA(Asn) or Glu-tRNA(Gln) in organisms which lack either or both of asparaginyl-tRNA or glutaminyl-tRNA synthetases. The reaction takes place in the presence of glutamine and ATP through an activated phospho-Asp-tRNA(Asn) or phospho-Glu-tRNA(Gln). This is Aspartyl/glutamyl-tRNA(Asn/Gln) amidotransferase subunit C from Cereibacter sphaeroides (strain ATCC 17023 / DSM 158 / JCM 6121 / CCUG 31486 / LMG 2827 / NBRC 12203 / NCIMB 8253 / ATH 2.4.1.) (Rhodobacter sphaeroides).